Reading from the N-terminus, the 535-residue chain is GMP synthase [glutamine-hydrolyzing] (535 aa).

The Glutamine amidotransferase type-1 domain occupies Leu21–Thr211. Cys98 serves as the catalytic Nucleophile. Residues His185 and Glu187 contribute to the active site. Residues Trp212–Arg410 form the GMPS ATP-PPase domain. ATP is bound at residue Ser239–Ser245.

In terms of assembly, homodimer.

The enzyme catalyses XMP + L-glutamine + ATP + H2O = GMP + L-glutamate + AMP + diphosphate + 2 H(+). It participates in purine metabolism; GMP biosynthesis; GMP from XMP (L-Gln route): step 1/1. Catalyzes the synthesis of GMP from XMP. The chain is GMP synthase [glutamine-hydrolyzing] from Thermosynechococcus vestitus (strain NIES-2133 / IAM M-273 / BP-1).